A 140-amino-acid chain; its full sequence is MSDAGGDVQVAPAAVAQGPMDKEGALRAVLRAAHHADGLAKGLHETCKALDKREAHFCVLAENCDEPQYVKLVETLCAEHQIPLIKVADKKIIGEYCGLCKYDKEGKARKVVGCSSAVVTNWGNEEQGRAILTDYFASKN.

This sequence belongs to the eukaryotic ribosomal protein eS12 family. As to quaternary structure, part of the small subunit (SSU) processome, composed of more than 70 proteins and the RNA chaperone small nucleolar RNA (snoRNA) U3. Subunit of the 40S ribosomal complex.

It is found in the nucleus. The protein resides in the nucleolus. In terms of biological role, part of the small subunit (SSU) processome, first precursor of the small eukaryotic ribosomal subunit. During the assembly of the SSU processome in the nucleolus, many ribosome biogenesis factors, an RNA chaperone and ribosomal proteins associate with the nascent pre-rRNA and work in concert to generate RNA folding, modifications, rearrangements and cleavage as well as targeted degradation of pre-ribosomal RNA by the RNA exosome. Subunit of the 40S ribosomal complex. Involved in cold-warm shock-induced translocation of the RNA exosome components from the nucleolus to nucleoplasm. This chain is Small ribosomal subunit protein eS12 (rps-12), found in Caenorhabditis elegans.